A 284-amino-acid polypeptide reads, in one-letter code: Ribosomal RNA small subunit methyltransferase A (284 aa).

6 residues coordinate S-adenosyl-L-methionine: Asn26, Leu28, Gly53, Glu74, Asp97, and Asn127.

It belongs to the class I-like SAM-binding methyltransferase superfamily. rRNA adenine N(6)-methyltransferase family. RsmA subfamily.

Its subcellular location is the cytoplasm. The enzyme catalyses adenosine(1518)/adenosine(1519) in 16S rRNA + 4 S-adenosyl-L-methionine = N(6)-dimethyladenosine(1518)/N(6)-dimethyladenosine(1519) in 16S rRNA + 4 S-adenosyl-L-homocysteine + 4 H(+). Its function is as follows. Specifically dimethylates two adjacent adenosines (A1518 and A1519) in the loop of a conserved hairpin near the 3'-end of 16S rRNA in the 30S particle. May play a critical role in biogenesis of 30S subunits. This chain is Ribosomal RNA small subunit methyltransferase A, found in Anaeromyxobacter dehalogenans (strain 2CP-1 / ATCC BAA-258).